The primary structure comprises 274 residues: Putative pyruvate, phosphate dikinase regulatory protein (274 aa).

150 to 157 (GPSRTSKT) serves as a coordination point for ADP.

It belongs to the pyruvate, phosphate/water dikinase regulatory protein family. PDRP subfamily.

The catalysed reaction is N(tele)-phospho-L-histidyl/L-threonyl-[pyruvate, phosphate dikinase] + ADP = N(tele)-phospho-L-histidyl/O-phospho-L-threonyl-[pyruvate, phosphate dikinase] + AMP + H(+). It carries out the reaction N(tele)-phospho-L-histidyl/O-phospho-L-threonyl-[pyruvate, phosphate dikinase] + phosphate + H(+) = N(tele)-phospho-L-histidyl/L-threonyl-[pyruvate, phosphate dikinase] + diphosphate. In terms of biological role, bifunctional serine/threonine kinase and phosphorylase involved in the regulation of the pyruvate, phosphate dikinase (PPDK) by catalyzing its phosphorylation/dephosphorylation. This Rickettsia peacockii (strain Rustic) protein is Putative pyruvate, phosphate dikinase regulatory protein.